The chain runs to 803 residues: Volume-regulated anion channel subunit LRRC8C (803 aa).

Residues 1-22 (MIPVTEFRQFSEQQPAFRVLKP) lie on the Cytoplasmic side of the membrane. Residues 23 to 43 (WWDVFTDYLSVAMLMIGVFGC) form a helical membrane-spanning segment. The Extracellular segment spans residues 44 to 125 (TLQVMQDKII…YERALHWYAK (82 aa)). 2 disulfides stabilise this stretch: C54/C308 and C115/C293. N-linked (GlcNAc...) asparagine glycosylation is found at N64 and N70. A helical membrane pass occupies residues 126–146 (YFPYLVLIHTLVFMLCSNFWF). Topologically, residues 147–266 (KFPGSSSKIE…ILYAMYVRQT (120 aa)) are cytoplasmic. The segment at 177–211 (EVSGEDSEEKDNRKNNMNRSNTIQSGPEGSLVKSQ) is disordered. Over residues 191–211 (NNMNRSNTIQSGPEGSLVKSQ) the composition is skewed to polar residues. A phosphoserine mark is found at S212 and S215. Residues 267 to 287 (VLKVIKFLIIIAYNSALVSKV) form a helical membrane-spanning segment. Residues 288-320 (QFTVDCNVDIQDMTGYKNFSCNHTMAHLFSKLS) lie on the Extracellular side of the membrane. The helical transmembrane segment at 321-341 (FCYLCFVSIYGLTCLYTLYWL) threads the bilayer. Topologically, residues 342 to 803 (FYRSLREYSF…SDVREQMKAD (462 aa)) are cytoplasmic. 17 LRR repeats span residues 397-420 (ENKL…KLQT), 421-443 (NAHN…VFEI), 446-466 (LQSL…IAQL), 467-488 (DNLQ…ALSF), 490-513 (KENL…MYGL), 515-537 (NLEE…TLES), 541-563 (LKSL…VVDV), 565-587 (SHLQ…NLKK), 588-611 (MTNL…VFSL), 613-635 (SLQE…SFQH), 637-659 (RKLT…IKKL), 660-682 (TSLE…LFLC), 684-705 (KIRY…IGVL), 706-728 (QSLQ…LYFC), 730-751 (KLKT…IGNL), 752-774 (LFLS…LGDC), and 776-799 (ALKR…VREQ).

The protein belongs to the LRRC8 family. As to quaternary structure, heterohexamer; oligomerizes with other LRRC8 proteins (LRRC8A, LRRC8B, LRRC8D and/or LRRC8E) to form a heterohexamer. Homoheptamer; inactive, likely because it is not targeted to the plasma membrane in the absence of LRRC8A. In vivo, the subunit composition may depend primarily on expression levels, and heterooligomeric channels containing various proportions of the different LRRC8 proteins may coexist.

Its subcellular location is the cell membrane. It is found in the endoplasmic reticulum membrane. The catalysed reaction is chloride(in) = chloride(out). It catalyses the reaction iodide(out) = iodide(in). It carries out the reaction taurine(out) = taurine(in). The enzyme catalyses 2',3'-cGAMP(out) = 2',3'-cGAMP(in). Functionally, non-essential component of the volume-regulated anion channel (VRAC, also named VSOAC channel), an anion channel required to maintain a constant cell volume in response to extracellular or intracellular osmotic changes. The VRAC channel conducts iodide better than chloride and can also conduct organic osmolytes like taurine. Plays a redundant role in the efflux of amino acids, such as aspartate and glutamate, in response to osmotic stress. The VRAC channel also mediates transport of immunoreactive cyclic dinucleotide GMP-AMP (2'-3'-cGAMP), an immune messenger produced in response to DNA virus in the cytosol. Channel activity requires LRRC8A plus at least one other family member (LRRC8B, LRRC8C, LRRC8D or LRRC8E); channel characteristics depend on the precise subunit composition. In Rattus norvegicus (Rat), this protein is Volume-regulated anion channel subunit LRRC8C.